A 187-amino-acid chain; its full sequence is Tetraheme c-type cytochrome CymA (187 aa).

Residues 1 to 12 (MNWRALFKPSAK) are Cytoplasmic-facing. A helical transmembrane segment spans residues 13-33 (YSILALLVVGIVIGVVGYFAT). The Periplasmic portion of the chain corresponds to 34 to 187 (QQTLHATSTD…KGVAHPYPKG (154 aa)). 14 residues coordinate heme c: Cys46, Cys49, His64, Cys75, Cys78, His79, Asp97, Cys136, Cys139, His140, Cys173, Cys176, His177, and His182.

It belongs to the NapC/NirT/NrfH family. As to quaternary structure, homodimer. Requires heme c as cofactor.

The protein resides in the cell inner membrane. It carries out the reaction a quinol + 2 Fe(III)-[cytochrome c](out) = a quinone + 2 Fe(II)-[cytochrome c](out) + 2 H(+)(out). Spectroscopic studies suggest that CymA requires a non-heme cofactor for quinol oxidation. Functionally, quinol dehydrogenase involved in several anaerobic electron transfer pathways. Acquires electrons from the membrane quinone pool and mediates their transfer to several periplasmic terminal reductases and redox shuttles, including the fumarate reductase FccA, the small tetraheme cytochrome (STC), the c-type cytochrome MtrA, the nitrate reductase NapA (either through NapB or directly), the nitrite reductase NrfA and probably also the DmsE subunit of dimethyl sulfoxide (DMSO) reductase. Required for growth on fumarate and on DMSO, and for the reduction of iron(III), manganese(IV), nitrite and nitrate. Not essential for growth on trimethylamine-N-oxide (TMAO). The sequence is that of Tetraheme c-type cytochrome CymA from Shewanella oneidensis (strain ATCC 700550 / JCM 31522 / CIP 106686 / LMG 19005 / NCIMB 14063 / MR-1).